A 956-amino-acid polypeptide reads, in one-letter code: MTLLLVSLLLASLLQISSGNKANKHKPWIEAEYQGIVMENDNTVLLNPPLFALDKDAPLRYAGEICGFRLHGSGVPFEAVILDKATGEGLIRAKEPVDCEAQKEHTFTIQAYDCGEGPDGTNTKKSHKATVHVRVNDVNEFAPVFVERLYRAAVTEGKLYDRILRVEAIDGDCSPQYSQICYYEILTPNTPFLIDNDGNIENTEKLQYSGEKLYKFTVTAYDCGKKRAADDAEVEIQVKPTCKPSWQGWNKRIEYAPGAGSLALFPGIRLETCDEPLWNIQATIELQTSHVAKGCDRDNYSERALRKLCGAATGEVDLLPMPGPNANWTAGLSVHYSQDSSLIYWFNGTQAVQVPLGGPAGLGSGPQDGFSDHFTLSFWMKHSVTPSKGKKEEETIVCNTVQNEDGYSHYSLTVHGCRIAFLYWPLLESARPVKFLWKLEQVCDDEWHHYALNLEFPTVTLYTDGISFDPALIHDNGLIHPPRREPALMIGACWTEEKNKEKKGGENSTDTASGDPLLIHHYFHGYLAGFSVRSGRLESREVIECLYACREGLDYRDFESLGKGMKVHVNPSQSLLTLEGDDVETFNHALQHVAYMNTLRFATPGVRPLRLTTAVKCFSEESCVSIPEVEGYVVVLQPDAPQILLSGTAHFARPAVDFEGPEGVPLFPDLQITCSISHQVEAKADESWQGTVTDTRMSDEIVHNLDGCEISLVGDDLDPERESLLLDMASLQQRGLELTNTSAYLTIAGVETITVYEEILRQARYQLRHGAALYARKFRLSCSEMNGRYSSNEFIVEVNVLHSMNRVAHPSHVLSSQQFLHRGHQPPPEMAGHSLASSHRNSMVPSAATLIIVVCVGFLVLMVILGLVRIHSLHRRVSGTGGPSGASTDPKDPDLFWDDSALTIIVNPMESYQNQQTCVAGVAGGQQEEEDSSDSEAADSPSSDERRIIESPPHRY.

The signal sequence occupies residues 1-19; sequence MTLLLVSLLLASLLQISSG. Residues 1 to 21 lie on the Cytoplasmic side of the membrane; the sequence is MTLLLVSLLLASLLQISSGNK. Topologically, residues 20 to 847 are extracellular; it reads NKANKHKPWI…SHRNSMVPSA (828 aa). The helical intramembrane region spans 22–42; that stretch reads ANKHKPWIEAEYQGIVMENDN. 2 consecutive Cadherin domains span residues 29-145 and 146-246; these read IEAE…APVF and VERL…KPSW. Topologically, residues 43 to 73 are cytoplasmic; sequence TVLLNPPLFALDKDAPLRYAGEICGFRLHGS. Residues 74–94 constitute an intramembrane region (helical); it reads GVPFEAVILDKATGEGLIRAK. The Cytoplasmic portion of the chain corresponds to 95-139; it reads EPVDCEAQKEHTFTIQAYDCGEGPDGTNTKKSHKATVHVRVNDVN. Positions 140–160 form an intramembrane region, helical; it reads EFAPVFVERLYRAAVTEGKLY. Residues 161-248 lie on the Cytoplasmic side of the membrane; the sequence is DRILRVEAID…KPTCKPSWQG (88 aa). The chain crosses the membrane as a helical span at residues 249 to 269; the sequence is WNKRIEYAPGAGSLALFPGIR. The Lumenal segment spans residues 270 to 357; the sequence is LETCDEPLWN…GTQAVQVPLG (88 aa). N299, N327, N347, N507, and N740 each carry an N-linked (GlcNAc...) asparagine glycan. A helical transmembrane segment spans residues 848–868; sequence ATLIIVVCVGFLVLMVILGLV. Residues 869–956 are Cytoplasmic-facing; it reads RIHSLHRRVS…RIIESPPHRY (88 aa). Residues 916–956 are disordered; sequence QTCVAGVAGGQQEEEDSSDSEAADSPSSDERRIIESPPHRY. Positions 927 to 937 are enriched in acidic residues; sequence QEEEDSSDSEA. A compositionally biased stretch (basic and acidic residues) spans 943–956; sequence SDERRIIESPPHRY.

Belongs to the calsyntenin family. As to quaternary structure, interacts (via cadherin domains) with both alpha and beta isoforms of neurexins (NRXN1, NRXN2 and NRXN3). Directly interacts with APBA2. Forms a tripartite complex with APBA2 and APP. Interacts with low affinity with KLC1. Interacts with SLC23A2/SVCT2. In terms of assembly, interacts with CIDEA; inhibiting the lipid transferase activity of CIDEA. Interacts with CIDEC; inhibiting the lipid transferase activity of CIDEC. In terms of processing, proteolytically processed under normal cellular conditions. A primary zeta-cleavage generates a large extracellular (soluble) N-terminal domain (sAlc) and a short C-terminal transmembrane fragment (CTF1). A secondary cleavage catalyzed by gamma-secretase within the transmembrane domain releases the beta-Alc-beta chain in the extracellular milieu and produces an intracellular fragment (AlcICD). This processing is strongly suppressed in the tripartite complex formed with APBA2 and APP, which seems to prevent the association with gamma-secretase. Ubiquitinated: endoplasmic reticulum-localized protein is ubiquitinated and degraded by the endoplasmic reticulum-associated degradation (ERAD) pathway. In terms of tissue distribution, restricted to the brain (at protein level). In the cerebral cortex, found in the somas and neuropil of all layers. Expressed at highest levels in neurons of cortical layer 5 and, at lower levels, in neurons of the upper layers. Highly expressed in Purkinje cells. Also found in a few scattered interneurons throughout the granule cell layer and occasionally in neurons in the molecular layer (at protein level). In all layers, high levels in a subpopulation of presumptive GABAergic neurons (based on morphology). As to expression, expression is restricted to adipose tissue, with high expression in thermogenic adipocytes (brown adipose tissue).

It localises to the postsynaptic cell membrane. It is found in the endoplasmic reticulum membrane. The protein resides in the golgi apparatus membrane. The protein localises to the cell projection. Its subcellular location is the dendrite. It localises to the lipid droplet. Postsynaptic adhesion molecule that binds to presynaptic neurexins to mediate both excitatory and inhibitory synapse formation. Promotes synapse development by acting as a cell adhesion molecule at the postsynaptic membrane, which associates with both neurexin-alpha and neurexin-beta proteins at the presynaptic membrane. Regulates the balance between excitatory and inhibitory synapses by inhibiting formation of excitatory parallel-fiber synapses and promoting formation of inhibitory synapses in the same neuron. May also be involved in ascorbate (vitamin C) uptake via its interaction with SLC23A2/SVCT2. Complex formation with APBA2 and APP, stabilizes APP metabolism and enhances APBA2-mediated suppression of beta-APP40 secretion, due to the retardation of intracellular APP maturation. Functionally, adipose-specific isoform that plays a key role in adaptive thermogenesis. Facilitates the efficient use of stored triglyceride by promoting multilocular morphology of thermogenic adipocytes: acts by inhibiting the activity of CIDEA and CIDEC on lipid droplets, thereby preventing lipid droplet fusion and facilitating lipid utilization. May also participate in adaptive thermogenesis by promoting sympathetic innervation of thermogenic adipose tissue: acts by driving secretion of neurotrophic factor S100B from brown adipocytes, stimulating neurite outgrowth from sympathetic neurons. This Mus musculus (Mouse) protein is Calsyntenin-3.